A 264-amino-acid chain; its full sequence is tRNA pseudouridine synthase A (264 aa).

Residue D51 is the Nucleophile of the active site. Y109 is a binding site for substrate.

This sequence belongs to the tRNA pseudouridine synthase TruA family. In terms of assembly, homodimer.

The catalysed reaction is uridine(38/39/40) in tRNA = pseudouridine(38/39/40) in tRNA. Its function is as follows. Formation of pseudouridine at positions 38, 39 and 40 in the anticodon stem and loop of transfer RNAs. The protein is tRNA pseudouridine synthase A of Pseudoalteromonas translucida (strain TAC 125).